A 198-amino-acid chain; its full sequence is Holliday junction resolvase RecU (198 aa).

Positions 1-29 (MIRYPNGKSYQPKTAASSLQKKPSYSNRG) are disordered. Residues 8–29 (KSYQPKTAASSLQKKPSYSNRG) are compositionally biased toward polar residues. 4 residues coordinate Mg(2+): T83, D85, E98, and Q117.

The protein belongs to the RecU family. It depends on Mg(2+) as a cofactor.

The protein localises to the cytoplasm. The enzyme catalyses Endonucleolytic cleavage at a junction such as a reciprocal single-stranded crossover between two homologous DNA duplexes (Holliday junction).. Its function is as follows. Endonuclease that resolves Holliday junction intermediates in genetic recombination. Cleaves mobile four-strand junctions by introducing symmetrical nicks in paired strands. Promotes annealing of linear ssDNA with homologous dsDNA. Required for DNA repair, homologous recombination and chromosome segregation. This is Holliday junction resolvase RecU from Bacillus licheniformis (strain ATCC 14580 / DSM 13 / JCM 2505 / CCUG 7422 / NBRC 12200 / NCIMB 9375 / NCTC 10341 / NRRL NRS-1264 / Gibson 46).